Consider the following 296-residue polypeptide: MLTFQEIILKLHHYWASKGCAIVQPLDMEVGAGTFHPATTLRAIGPEPWTAAYVQPSRRPTDGRYGENPNRTQHYYQYQVVMKPSPDDIQELYLGSLRELGIDPLENDIRFVEDNWESPTLGAWGLGWEVWSNGMEITQFTYFQQVGGLECKPVMGEITYGLERLAMYIQNVDSMYDILWANTQNGPLYYRDVFLQNEVEMSTYNFEEANVEELFKQFDLLEKEGYRLVEKNLPIPAYEFVLKASHTFNLLDARHAISVTERQGYILRVRKLALEVAKEYYSAREKSGFPAFKKDN.

The protein belongs to the class-II aminoacyl-tRNA synthetase family. In terms of assembly, tetramer of two alpha and two beta subunits.

Its subcellular location is the cytoplasm. It carries out the reaction tRNA(Gly) + glycine + ATP = glycyl-tRNA(Gly) + AMP + diphosphate. This is Glycine--tRNA ligase alpha subunit from Francisella tularensis subsp. holarctica (strain FTNF002-00 / FTA).